A 224-amino-acid chain; its full sequence is uncharacterized protein (224 aa).

Residues 44 to 139 (TSPPIVPLPT…PSPPPSPSPL (96 aa)) are compositionally biased toward pro residues. A disordered region spans residues 44-145 (TSPPIVPLPT…PSPLGEPMYY (102 aa)).

This is an uncharacterized protein from Lepidoptera (butterflies and moths).